Here is a 368-residue protein sequence, read N- to C-terminus: Cytochrome b (368 aa).

The next 4 helical transmembrane spans lie at 32–52 (FGFLVAMTFVLQIITGITLAF), 76–98 (WEFRMLHATTASFVFLCILIHMT), 112–132 (AWMSGLVLYLLTIATAFLGYV), and 174–194 (FFVLHFILPFIGCIIIVLHIF). Residues His-82 and His-96 each contribute to the heme b site. Heme b is bound by residues His-178 and His-192. Residue His-197 coordinates a ubiquinone. 4 consecutive transmembrane segments (helical) span residues 219–239 (MLMTDAKCLSYLIGLIFLQAA), 285–305 (GLLVFMSSLINLGLLSEIRAL), 323–343 (GWVIIWVYSMIFLIIIGSAIP), and 347–367 (YILYGRLATILYLTTGLVLCL).

Belongs to the cytochrome b family. The main subunits of complex b-c1 are: cytochrome b, cytochrome c1 and the Rieske protein. Heme b is required as a cofactor.

The protein resides in the mitochondrion inner membrane. Component of the ubiquinol-cytochrome c reductase complex (complex III or cytochrome b-c1 complex) that is part of the mitochondrial respiratory chain. The b-c1 complex mediates electron transfer from ubiquinol to cytochrome c. Contributes to the generation of a proton gradient across the mitochondrial membrane that is then used for ATP synthesis. In Toxoplasma gondii, this protein is Cytochrome b (MT-CYB).